The chain runs to 489 residues: Ecdysteroid UDP-glucosyltransferase (489 aa).

Positions 1–17 are cleaved as a signal peptide; sequence MVFLIIALTLLATGARA.

This sequence belongs to the UDP-glycosyltransferase family.

Catalyzes the transfer of glucose from UDP-glucose to ecdysteroids which are insect molting hormones. Expression of egt interferes with normal insect development and block molting. This Orgyia pseudotsugata (Douglas-fir tussock moth) protein is Ecdysteroid UDP-glucosyltransferase (EGT).